The sequence spans 253 residues: Ribosome-inactivating protein saporin-7 (253 aa).

E176 is a catalytic residue.

Belongs to the ribosome-inactivating protein family. Type 1 RIP subfamily.

The enzyme catalyses Endohydrolysis of the N-glycosidic bond at one specific adenosine on the 28S rRNA.. Functionally, ribosome-inactivating protein of type 1, inhibits protein synthesis in animal cells. The protein is Ribosome-inactivating protein saporin-7 (SAP7) of Saponaria officinalis (Common soapwort).